Reading from the N-terminus, the 282-residue chain is Formamidopyrimidine-DNA glycosylase (282 aa).

Pro2 serves as the catalytic Schiff-base intermediate with DNA. Glu3 functions as the Proton donor in the catalytic mechanism. The active-site Proton donor; for beta-elimination activity is Lys61. DNA is bound by residues His93, Arg112, and Lys158. Residues 244–278 form an FPG-type zinc finger; it reads DAYGREGEPCRRCGAIMRRDKFMNRSSFYCPRCQP. The Proton donor; for delta-elimination activity role is filled by Arg268.

It belongs to the FPG family. In terms of assembly, monomer. Zn(2+) is required as a cofactor.

It catalyses the reaction Hydrolysis of DNA containing ring-opened 7-methylguanine residues, releasing 2,6-diamino-4-hydroxy-5-(N-methyl)formamidopyrimidine.. It carries out the reaction 2'-deoxyribonucleotide-(2'-deoxyribose 5'-phosphate)-2'-deoxyribonucleotide-DNA = a 3'-end 2'-deoxyribonucleotide-(2,3-dehydro-2,3-deoxyribose 5'-phosphate)-DNA + a 5'-end 5'-phospho-2'-deoxyribonucleoside-DNA + H(+). Functionally, involved in base excision repair of DNA damaged by oxidation or by mutagenic agents. Acts as a DNA glycosylase that recognizes and removes damaged bases. Has a preference for oxidized purines, such as 7,8-dihydro-8-oxoguanine (8-oxoG). Has AP (apurinic/apyrimidinic) lyase activity and introduces nicks in the DNA strand. Cleaves the DNA backbone by beta-delta elimination to generate a single-strand break at the site of the removed base with both 3'- and 5'-phosphates. In Mycolicibacterium gilvum (strain PYR-GCK) (Mycobacterium gilvum (strain PYR-GCK)), this protein is Formamidopyrimidine-DNA glycosylase.